A 221-amino-acid chain; its full sequence is CDP-diacylglycerol--glycerol-3-phosphate 3-phosphatidyltransferase (221 aa).

5 helical membrane passes run 8 to 28 (ILTV…LYFH), 34 to 54 (WFAL…GYLA), 75 to 95 (MVVI…WLIL), 133 to 153 (AQMV…LEGI), and 187 to 207 (ATWL…ITGW).

The protein belongs to the CDP-alcohol phosphatidyltransferase class-I family.

Its subcellular location is the cell membrane. The enzyme catalyses a CDP-1,2-diacyl-sn-glycerol + sn-glycerol 3-phosphate = a 1,2-diacyl-sn-glycero-3-phospho-(1'-sn-glycero-3'-phosphate) + CMP + H(+). It functions in the pathway phospholipid metabolism; phosphatidylglycerol biosynthesis; phosphatidylglycerol from CDP-diacylglycerol: step 1/2. Functionally, this protein catalyzes the committed step to the synthesis of the acidic phospholipids. The chain is CDP-diacylglycerol--glycerol-3-phosphate 3-phosphatidyltransferase (pgsA) from Cereibacter sphaeroides (strain ATCC 17023 / DSM 158 / JCM 6121 / CCUG 31486 / LMG 2827 / NBRC 12203 / NCIMB 8253 / ATH 2.4.1.) (Rhodobacter sphaeroides).